The sequence spans 226 residues: Enolase-phosphatase E1 (226 aa).

Belongs to the HAD-like hydrolase superfamily. MasA/MtnC family. In terms of assembly, monomer. Mg(2+) is required as a cofactor.

The catalysed reaction is 5-methylsulfanyl-2,3-dioxopentyl phosphate + H2O = 1,2-dihydroxy-5-(methylsulfanyl)pent-1-en-3-one + phosphate. It participates in amino-acid biosynthesis; L-methionine biosynthesis via salvage pathway; L-methionine from S-methyl-5-thio-alpha-D-ribose 1-phosphate: step 3/6. It functions in the pathway amino-acid biosynthesis; L-methionine biosynthesis via salvage pathway; L-methionine from S-methyl-5-thio-alpha-D-ribose 1-phosphate: step 4/6. Functionally, bifunctional enzyme that catalyzes the enolization of 2,3-diketo-5-methylthiopentyl-1-phosphate (DK-MTP-1-P) into the intermediate 2-hydroxy-3-keto-5-methylthiopentenyl-1-phosphate (HK-MTPenyl-1-P), which is then dephosphorylated to form the acireductone 1,2-dihydroxy-3-keto-5-methylthiopentene (DHK-MTPene). The chain is Enolase-phosphatase E1 from Shewanella baltica (strain OS195).